The chain runs to 431 residues: Serine/threonine-protein kinase Sgk1 (431 aa).

The interval 1–60 (MTVKAEAARSTLTYSRMRGMVAILIAFMKQRRMGLNDFIQKIASNTYACKHAEVQSILKM) is necessary for localization to the mitochondria. Positions 65 to 92 (EPELMNANPSPPPSPSQQINLGPSSNPH) are disordered. Ser-74 carries the phosphoserine modification. The residue at position 78 (Ser-78) is a Phosphoserine; by MAPK7. A compositionally biased stretch (polar residues) spans 81–91 (QQINLGPSSNP). The region spanning 98–355 (FHFLKVIGKG…FMEIKSHIFF (258 aa)) is the Protein kinase domain. Residues 104-112 (IGKGSFGKV) and Lys-127 contribute to the ATP site. Residues 131-141 (KKAILKKKEEK) carry the Nuclear localization signal motif. Asp-222 (proton acceptor) is an active-site residue. Thr-256 carries the post-translational modification Phosphothreonine; by PDPK1. Residues 356 to 431 (SLINWDDLIN…SYAPPVDSFL (76 aa)) enclose the AGC-kinase C-terminal domain. Thr-369 bears the Phosphothreonine; by PKA mark. 3 positions are modified to phosphoserine: Ser-397, Ser-401, and Ser-422.

The protein belongs to the protein kinase superfamily. AGC Ser/Thr protein kinase family. Homodimer; disulfide-linked. Interacts with MAPK3/ERK1, MAPK1/ERK2, MAP2K1/MEK1, MAP2K2/MEK2, NEDD4, NEDD4L, MAPT/TAU, MAPK7, CREB1, SLC9A3R2/NHERF2 and KCNJ1/ROMK1. Forms a trimeric complex with FBXW7 and NOTCH1 Associates with the mammalian target of rapamycin complex 2 (mTORC2) via an interaction with MAPKAP1/SIN1. Post-translationally, regulated by phosphorylation. Activated by phosphorylation on Ser-422 by mTORC2, transforming it into a substrate for PDPK1 which phosphorylates it on Thr-256. Phosphorylation on Ser-397 and Ser-401 are also essential for its activity. Phosphorylation on Ser-78 by MAPK7 is required for growth factor-induced cell cycle progression. In terms of processing, ubiquitinated by NEDD4L; which promotes proteasomal degradation. Ubiquitinated by SYVN1 at the endoplasmic reticulum; which promotes rapid proteasomal degradation and maintains a high turnover rate in resting cells.

The protein localises to the cytoplasm. Its subcellular location is the nucleus. The protein resides in the endoplasmic reticulum membrane. It localises to the cell membrane. It is found in the mitochondrion. The catalysed reaction is L-seryl-[protein] + ATP = O-phospho-L-seryl-[protein] + ADP + H(+). It carries out the reaction L-threonyl-[protein] + ATP = O-phospho-L-threonyl-[protein] + ADP + H(+). With respect to regulation, two specific sites, one in the kinase domain (Thr-256) and the other in the C-terminal regulatory region (Ser-422), need to be phosphorylated for its full activation. Phosphorylation at Ser-397 and Ser-401 are also essential for its activity. Activated by WNK1, WNK2, WNK3 and WNK4; which promote phosphorylation by mTORC2. Functionally, serine/threonine-protein kinase which is involved in the regulation of a wide variety of ion channels, membrane transporters, cellular enzymes, transcription factors, neuronal excitability, cell growth, proliferation, survival, migration and apoptosis. Plays an important role in cellular stress response. Contributes to regulation of renal Na(+) retention, renal K(+) elimination, salt appetite, gastric acid secretion, intestinal Na(+)/H(+) exchange and nutrient transport, insulin-dependent salt sensitivity of blood pressure, salt sensitivity of peripheral glucose uptake, cardiac repolarization and memory consolidation. Up-regulates Na(+) channels: SCNN1A/ENAC, SCN5A and ASIC1/ACCN2, K(+) channels: KCNJ1/ROMK1, KCNA1-5, KCNQ1-5 and KCNE1, epithelial Ca(2+) channels: TRPV5 and TRPV6, chloride channels: BSND, CLCN2 and CFTR, glutamate transporters: SLC1A3/EAAT1, SLC1A2 /EAAT2, SLC1A1/EAAT3, SLC1A6/EAAT4 and SLC1A7/EAAT5, amino acid transporters: SLC1A5/ASCT2, SLC38A1/SN1 and SLC6A19, creatine transporter: SLC6A8, Na(+)/dicarboxylate cotransporter: SLC13A2/NADC1, Na(+)-dependent phosphate cotransporter: SLC34A2/NAPI-2B, glutamate receptor: GRIK2/GLUR6. Up-regulates carriers: SLC9A3/NHE3, SLC12A1/NKCC2, SLC12A3/NCC, SLC5A3/SMIT, SLC2A1/GLUT1, SLC5A1/SGLT1 and SLC15A2/PEPT2. Regulates enzymes: GSK3A/B, PMM2 and Na(+)/K(+) ATPase, and transcription factors: CTNNB1 and nuclear factor NF-kappa-B. Stimulates sodium transport into epithelial cells by enhancing the stability and expression of SCNN1A/ENAC. This is achieved by phosphorylating the NEDD4L ubiquitin E3 ligase, promoting its interaction with 14-3-3 proteins, thereby preventing it from binding to SCNN1A/ENAC and targeting it for degradation. Regulates store-operated Ca(+2) entry (SOCE) by stimulating ORAI1 and STIM1. Regulates KCNJ1/ROMK1 directly via its phosphorylation or indirectly via increased interaction with SLC9A3R2/NHERF2. Phosphorylates MDM2 and activates MDM2-dependent ubiquitination of p53/TP53. Phosphorylates MAPT/TAU and mediates microtubule depolymerization and neurite formation in hippocampal neurons. Phosphorylates SLC2A4/GLUT4 and up-regulates its activity. Phosphorylates APBB1/FE65 and promotes its localization to the nucleus. Phosphorylates MAPK1/ERK2 and activates it by enhancing its interaction with MAP2K1/MEK1 and MAP2K2/MEK2. Phosphorylates FBXW7 and plays an inhibitory role in the NOTCH1 signaling. Phosphorylates FOXO1 resulting in its relocalization from the nucleus to the cytoplasm. Phosphorylates FOXO3, promoting its exit from the nucleus and interference with FOXO3-dependent transcription. Phosphorylates BRAF and MAP3K3/MEKK3 and inhibits their activity. Phosphorylates SLC9A3/NHE3 in response to dexamethasone, resulting in its activation and increased localization at the cell membrane. Phosphorylates CREB1. Necessary for vascular remodeling during angiogenesis. This is Serine/threonine-protein kinase Sgk1 (Sgk1) from Mus musculus (Mouse).